The chain runs to 344 residues: Phenylalanine--tRNA ligase alpha subunit (344 aa).

Glu258 contacts Mg(2+).

This sequence belongs to the class-II aminoacyl-tRNA synthetase family. Phe-tRNA synthetase alpha subunit type 1 subfamily. In terms of assembly, tetramer of two alpha and two beta subunits. The cofactor is Mg(2+).

It localises to the cytoplasm. The catalysed reaction is tRNA(Phe) + L-phenylalanine + ATP = L-phenylalanyl-tRNA(Phe) + AMP + diphosphate + H(+). The polypeptide is Phenylalanine--tRNA ligase alpha subunit (Thiobacillus denitrificans (strain ATCC 25259 / T1)).